The primary structure comprises 473 residues: Cyprosin (473 aa).

The propeptide at 1–33 (LKKRKVNILNHPGEHAGSNDANARRKYGVRGNF) is activation peptide. The 420-residue stretch at 51 to 470 (YFGEIGIGTP…DYGNLRVGFA (420 aa)) folds into the Peptidase A1 domain. Asp-69 is an active-site residue. Intrachain disulfides connect Cys-82–Cys-88 and Cys-247–Cys-251. The active site involves Asp-256. Residues 281 to 384 (VMSQQCKSLV…DKLCERLPSP (104 aa)) enclose the Saposin B-type domain. Cystine bridges form between Cys-286–Cys-378, Cys-311–Cys-350, Cys-317–Cys-347, and Cys-392–Cys-429. An N-linked (GlcNAc...) asparagine glycan is attached at Asn-364.

It belongs to the peptidase A1 family. In terms of tissue distribution, mostly present in the violet parts of styles and corollas of mature flowers.

This is Cyprosin (CYPRO1) from Cynara cardunculus (Cardoon).